The primary structure comprises 354 residues: S-adenosylmethionine:tRNA ribosyltransferase-isomerase (354 aa).

This sequence belongs to the QueA family. As to quaternary structure, monomer.

It localises to the cytoplasm. The catalysed reaction is 7-aminomethyl-7-carbaguanosine(34) in tRNA + S-adenosyl-L-methionine = epoxyqueuosine(34) in tRNA + adenine + L-methionine + 2 H(+). It participates in tRNA modification; tRNA-queuosine biosynthesis. In terms of biological role, transfers and isomerizes the ribose moiety from AdoMet to the 7-aminomethyl group of 7-deazaguanine (preQ1-tRNA) to give epoxyqueuosine (oQ-tRNA). This is S-adenosylmethionine:tRNA ribosyltransferase-isomerase from Salmonella schwarzengrund (strain CVM19633).